The chain runs to 250 residues: 7-cyano-7-deazaguanine synthase (250 aa).

21-31 (FSGGQDSSVCL) is a binding site for ATP. Residues cysteine 209, cysteine 224, cysteine 227, and cysteine 230 each contribute to the Zn(2+) site.

Belongs to the QueC family. The cofactor is Zn(2+).

It catalyses the reaction 7-carboxy-7-deazaguanine + NH4(+) + ATP = 7-cyano-7-deazaguanine + ADP + phosphate + H2O + H(+). Its pathway is purine metabolism; 7-cyano-7-deazaguanine biosynthesis. Functionally, catalyzes the ATP-dependent conversion of 7-carboxy-7-deazaguanine (CDG) to 7-cyano-7-deazaguanine (preQ(0)). This Caulobacter sp. (strain K31) protein is 7-cyano-7-deazaguanine synthase.